A 138-amino-acid polypeptide reads, in one-letter code: Endonuclease V (138 aa).

T2 functions as the Nucleophile; via amide nitrogen in the catalytic mechanism. The Proton acceptor role is filled by E23.

As to quaternary structure, monomer.

It catalyses the reaction Cleaves the N-glycosidic bond between the 5'-pyrimidine residue in cyclobutadipyrimidine (in DNA) and the corresponding deoxy-D-ribose residue.. The catalysed reaction is 2'-deoxyribonucleotide-(2'-deoxyribose 5'-phosphate)-2'-deoxyribonucleotide-DNA = a 3'-end 2'-deoxyribonucleotide-(2,3-dehydro-2,3-deoxyribose 5'-phosphate)-DNA + a 5'-end 5'-phospho-2'-deoxyribonucleoside-DNA + H(+). Participates in the repair of UV-damaged DNA by excising pyrimidine dimers that are the major UV-lesions. DNA glycosylase activity hydrolyzes the glycosylic bond of the 5' pyrimidine of the dimer. This leaves apurinic/apyrimidic (AP) sites in the DNA. These AP sites are removed by the AP lyase activity which cleaves the intrapyrimidine phosphodiester bond. Catalysis proceeds via a protonated imine covalent intermediate between the alpha-amino group of the N-terminal threonine residue and the C1' of the deoxyribose sugar of the 5' pyrimidine at the dimer site. This chain is Endonuclease V, found in Enterobacteria phage T4 (Bacteriophage T4).